A 448-amino-acid chain; its full sequence is MNITFIGSGYVGLVSGIIMGYLGHNVTCLDNDEVKISKLNKQILPIYEAKLDEYLKQALEANRLKFTNIYNNELQNAEAIFITVGTPSKESGEADLKYVYDAIDKVSEHINKDCLIVIKSTVPPDSCSNIIAYLKSKGFSFNVASNPEFLREGSAVEDFLYPDRIVVGVNNKESEEILRKIYAPLIEQGAKFVVTDLVTSELIKYASNSFLATKIAFINEMADLCEKIGGNIEDLSKGVGLDQRIGQNFLNAGPGFGGSCFPKDILALNNLVENHHIDCKILKAVIKSNKQRPSNMVDKIATLLDGDLKGKNIAVLGLTYKAGTDDVRASPAIEIVKILLNKDVYVKAFDPIGLENAKKNLEHKNLLYLDSVAEACKSVDIIVIATEWLEFKELNWQGIYDLVKFPIVIDLRNIIDNEAMKKIGFRYYAVGSKLDVIPAKAGIHYKAR.

NAD(+) contacts are provided by residues 2-19 (NITF…GIIM), Val11, Asp30, Lys35, Thr121, and Glu152. Substrate-binding positions include 148-152 (EFLRE), Lys204, Asn208, 249-253 (FLNAG), and Gly257. Cys260 acts as the Nucleophile in catalysis. Residue Lys263 coordinates NAD(+). Lys321 contributes to the substrate binding site. Arg328 provides a ligand contact to NAD(+).

The protein belongs to the UDP-glucose/GDP-mannose dehydrogenase family.

The enzyme catalyses UDP-alpha-D-glucose + 2 NAD(+) + H2O = UDP-alpha-D-glucuronate + 2 NADH + 3 H(+). The protein operates within nucleotide-sugar biosynthesis; UDP-alpha-D-glucuronate biosynthesis; UDP-alpha-D-glucuronate from UDP-alpha-D-glucose: step 1/1. This Rickettsia felis (strain ATCC VR-1525 / URRWXCal2) (Rickettsia azadi) protein is UDP-glucose 6-dehydrogenase (udg).